We begin with the raw amino-acid sequence, 496 residues long: Cobyric acid synthase (496 aa).

The region spanning T258–L427 is the GATase cobBQ-type domain. The active-site Nucleophile is C339. Residue H419 is part of the active site.

It belongs to the CobB/CobQ family. CobQ subfamily.

The protein operates within cofactor biosynthesis; adenosylcobalamin biosynthesis. In terms of biological role, catalyzes amidations at positions B, D, E, and G on adenosylcobyrinic A,C-diamide. NH(2) groups are provided by glutamine, and one molecule of ATP is hydrogenolyzed for each amidation. This Mycolicibacterium smegmatis (strain ATCC 700084 / mc(2)155) (Mycobacterium smegmatis) protein is Cobyric acid synthase.